The sequence spans 190 residues: Hypoxanthine/guanine phosphoribosyltransferase (190 aa).

The protein belongs to the purine/pyrimidine phosphoribosyltransferase family. Archaeal HPRT subfamily. In terms of assembly, homodimer.

It localises to the cytoplasm. The catalysed reaction is IMP + diphosphate = hypoxanthine + 5-phospho-alpha-D-ribose 1-diphosphate. The enzyme catalyses GMP + diphosphate = guanine + 5-phospho-alpha-D-ribose 1-diphosphate. The protein operates within purine metabolism; IMP biosynthesis via salvage pathway; IMP from hypoxanthine: step 1/1. Its function is as follows. Catalyzes a salvage reaction resulting in the formation of IMP that is energically less costly than de novo synthesis. This is Hypoxanthine/guanine phosphoribosyltransferase from Methanothrix thermoacetophila (strain DSM 6194 / JCM 14653 / NBRC 101360 / PT) (Methanosaeta thermophila).